A 98-amino-acid polypeptide reads, in one-letter code: NADH-ubiquinone oxidoreductase chain 4L (98 aa).

3 helical membrane-spanning segments follow: residues 1 to 21, 29 to 49, and 61 to 81; these read MTPTYMNIMLAFTISLLGMLI, SLLCLEGMMMSLFIMTTLIAL, and IILLVFAACEAAVGLALLVSI.

It belongs to the complex I subunit 4L family. As to quaternary structure, core subunit of respiratory chain NADH dehydrogenase (Complex I) which is composed of 45 different subunits.

Its subcellular location is the mitochondrion inner membrane. It catalyses the reaction a ubiquinone + NADH + 5 H(+)(in) = a ubiquinol + NAD(+) + 4 H(+)(out). In terms of biological role, core subunit of the mitochondrial membrane respiratory chain NADH dehydrogenase (Complex I) which catalyzes electron transfer from NADH through the respiratory chain, using ubiquinone as an electron acceptor. Part of the enzyme membrane arm which is embedded in the lipid bilayer and involved in proton translocation. The protein is NADH-ubiquinone oxidoreductase chain 4L (MT-ND4L) of Macaca maura (Moor macaque).